The chain runs to 436 residues: Trigger factor (436 aa).

The PPIase FKBP-type domain occupies 163-248 (DDRIVLDFAG…VKEVAEAVLP (86 aa)).

This sequence belongs to the FKBP-type PPIase family. Tig subfamily.

The protein localises to the cytoplasm. It catalyses the reaction [protein]-peptidylproline (omega=180) = [protein]-peptidylproline (omega=0). In terms of biological role, involved in protein export. Acts as a chaperone by maintaining the newly synthesized protein in an open conformation. Functions as a peptidyl-prolyl cis-trans isomerase. This Bordetella avium (strain 197N) protein is Trigger factor.